The primary structure comprises 1021 residues: Ephrin type-B receptor 6 (1021 aa).

The N-terminal stretch at Met-1–Ala-31 is a signal peptide. Residues Leu-32 to Ser-594 lie on the Extracellular side of the membrane. In terms of domain architecture, Eph LBD spans Glu-33–Arg-237. Residues Ser-163–Gly-182 form a disordered region. Over residues Ser-166 to Ser-176 the composition is skewed to low complexity. Fibronectin type-III domains follow at residues Pro-369–Glu-486 and Val-487–Gln-582. N-linked (GlcNAc...) asparagine glycosylation is present at Asn-480. Residues Leu-595–Leu-615 traverse the membrane as a helical segment. The Cytoplasmic portion of the chain corresponds to Ala-616–Val-1021. A Protein kinase domain is found at Ile-670–Ile-919. Residue Ile-676–Val-684 participates in ATP binding. An SAM domain is found at Pro-948–His-1012. The PDZ-binding motif lies at Val-1019–Val-1021.

The protein belongs to the protein kinase superfamily. Tyr protein kinase family. Ephrin receptor subfamily. As to quaternary structure, interacts with CBL and EPHB1. Interacts with FYN; this interaction takes place in a ligand-independent manner. Ligand-binding increases phosphorylation on tyrosine residues. Phosphorylation on tyrosine residues is mediated by transphosphorylation by the catalytically active EPHB1 in a ligand-independent manner. Tyrosine phosphorylation of the receptor may act as a switch on the functional transition from cell adhesion/attraction to de-adhesion/repulsion. In terms of tissue distribution, expressed in brain. Expressed in non invasive breast carcinoma cell lines (at protein level). Strong expression in brain and pancreas, and weak expression in other tissues, such as heart, placenta, lung, liver, skeletal muscle and kidney. Expressed in breast non invasive tumors but not in metastatic lesions. Isoform 3 is expressed in cell lines of glioblastomas, anaplastic astrocytomas, gliosarcomas and astrocytomas. Isoform 3 is not detected in normal tissues.

The protein resides in the membrane. It is found in the secreted. Its function is as follows. Kinase-defective receptor for members of the ephrin-B family. Binds to ephrin-B1 and ephrin-B2. Modulates cell adhesion and migration by exerting both positive and negative effects upon stimulation with ephrin-B2. Inhibits JNK activation, T-cell receptor-induced IL-2 secretion and CD25 expression upon stimulation with ephrin-B2. The chain is Ephrin type-B receptor 6 (EPHB6) from Homo sapiens (Human).